The primary structure comprises 162 residues: Transcription elongation factor GreA (162 aa).

Residues 45 to 74 (ENAEYEAAREKQAFIEGRIKELEDMTARAE) adopt a coiled-coil conformation.

Belongs to the GreA/GreB family.

Necessary for efficient RNA polymerase transcription elongation past template-encoded arresting sites. The arresting sites in DNA have the property of trapping a certain fraction of elongating RNA polymerases that pass through, resulting in locked ternary complexes. Cleavage of the nascent transcript by cleavage factors such as GreA or GreB allows the resumption of elongation from the new 3'terminus. GreA releases sequences of 2 to 3 nucleotides. In Rickettsia typhi (strain ATCC VR-144 / Wilmington), this protein is Transcription elongation factor GreA.